A 365-amino-acid polypeptide reads, in one-letter code: Alanine racemase (365 aa).

Residue Lys-35 is the Proton acceptor; specific for D-alanine of the active site. N6-(pyridoxal phosphate)lysine is present on Lys-35. Substrate is bound at residue Arg-130. The active-site Proton acceptor; specific for L-alanine is the Tyr-256. Met-304 provides a ligand contact to substrate.

The protein belongs to the alanine racemase family. Pyridoxal 5'-phosphate is required as a cofactor.

The catalysed reaction is L-alanine = D-alanine. Its pathway is amino-acid biosynthesis; D-alanine biosynthesis; D-alanine from L-alanine: step 1/1. Its function is as follows. Catalyzes the interconversion of L-alanine and D-alanine. May also act on other amino acids. This Acidovorax ebreus (strain TPSY) (Diaphorobacter sp. (strain TPSY)) protein is Alanine racemase (alr).